The following is a 187-amino-acid chain: Large ribosomal subunit protein uL5 (187 aa).

This sequence belongs to the universal ribosomal protein uL5 family. Part of the 50S ribosomal subunit; part of the 5S rRNA/L5/L18/L25 subcomplex. Contacts the 5S rRNA and the P site tRNA. Forms a bridge to the 30S subunit in the 70S ribosome.

In terms of biological role, this is one of the proteins that bind and probably mediate the attachment of the 5S RNA into the large ribosomal subunit, where it forms part of the central protuberance. In the 70S ribosome it contacts protein S13 of the 30S subunit (bridge B1b), connecting the 2 subunits; this bridge is implicated in subunit movement. Contacts the P site tRNA; the 5S rRNA and some of its associated proteins might help stabilize positioning of ribosome-bound tRNAs. In Corynebacterium diphtheriae (strain ATCC 700971 / NCTC 13129 / Biotype gravis), this protein is Large ribosomal subunit protein uL5.